Reading from the N-terminus, the 94-residue chain is Selenoprotein K (94 aa).

The chain crosses the membrane as a helical span at residues 20 to 42 (LSFLTDFFWGAVEFIGLFFQTLV). Residues 48-94 (KDGNNSASSRFSDGRGPPGFPGRRRMGRINHGAGPTPPPMGGGGUGR) form a disordered region. A compositionally biased stretch (polar residues) spans 49–58 (DGNNSASSRF). Residue Sec92 is a non-standard amino acid, selenocysteine.

Belongs to the selenoprotein K family.

Its subcellular location is the endoplasmic reticulum membrane. It is found in the cell membrane. Required for Ca(2+) flux in immune cells and plays a role in T-cell proliferation and in T-cell and neutrophil migration. Involved in endoplasmic reticulum-associated degradation (ERAD) of soluble glycosylated proteins. Required for cell surface expression of CD36 and involved in macrophage uptake of low-density lipoprotein and in foam cell formation. Required for palmitoylation. This Danio rerio (Zebrafish) protein is Selenoprotein K (selenok).